A 101-amino-acid chain; its full sequence is NADH-quinone oxidoreductase subunit K (101 aa).

3 helical membrane passes run 4–24, 30–50, and 62–82; these read LGHL…GIFL, IVLL…FIAF, and FVFF…AILV.

This sequence belongs to the complex I subunit 4L family. NDH-1 is composed of 14 different subunits. Subunits NuoA, H, J, K, L, M, N constitute the membrane sector of the complex.

Its subcellular location is the cell inner membrane. It catalyses the reaction a quinone + NADH + 5 H(+)(in) = a quinol + NAD(+) + 4 H(+)(out). Functionally, NDH-1 shuttles electrons from NADH, via FMN and iron-sulfur (Fe-S) centers, to quinones in the respiratory chain. The immediate electron acceptor for the enzyme in this species is believed to be ubiquinone. Couples the redox reaction to proton translocation (for every two electrons transferred, four hydrogen ions are translocated across the cytoplasmic membrane), and thus conserves the redox energy in a proton gradient. The chain is NADH-quinone oxidoreductase subunit K from Xylella fastidiosa (strain Temecula1 / ATCC 700964).